We begin with the raw amino-acid sequence, 341 residues long: Short chain dehydrogenase FGM9 (341 aa).

4 residues coordinate NADP(+): L38, K63, D88, and N114. Catalysis depends on proton donor residues S167 and Y200. Positions 200 and 204 each coordinate NADP(+). K204 (lowers pKa of active site Tyr) is an active-site residue.

It belongs to the short-chain dehydrogenases/reductases (SDR) family.

Its pathway is secondary metabolite biosynthesis. Its function is as follows. Short chain dehydrogenase; part of the Fg3_54/C64 gene cluster that mediates the biosynthesis of the octapeptide fusaoctaxin A, a virulence factor that is required for cell-to-cell invasiveness of plant host. The 2 nonribosomal peptide synthetases NRPS9 and NRPS5 form an assembly line which likely utilizes GABA as a starter unit (loaded on the unique module M1 of NRPS9) and sequentially incorporates seven extender units composed of the residues L-Ala, L-allo-Ile, L-Ser, L-Val, L-Ser, L-Leu and L-Leu, respectively. During the process, each of the residues that are tethered on modules M3-M7 of NRPS5 containing an E domain can undergo an epimerization reaction to produce a D-configuration before the transpeptidation reaction occurs. The elongation of the peptidyl chain might be terminated by module M8-mediated L-Leu incorporation, followed by R domain-catalyzed 4 electron reduction to release the resulting octapeptide from the assembly line as an alcohol. Fusaoctaxin A is cleaved by the cluster specific ABC transporter FGM5 to the pentapeptide fusapentaxin A and the tripeptide fusatrixin A. The other enzymes from the cluster, FGM1, FGM2, FGM3 and FGM9 seem not to be involved in the biosynthesis of fusaoctaxin A and their functions have still to be determined. The chain is Short chain dehydrogenase FGM9 from Gibberella zeae (strain ATCC MYA-4620 / CBS 123657 / FGSC 9075 / NRRL 31084 / PH-1) (Wheat head blight fungus).